An 89-amino-acid polypeptide reads, in one-letter code: MAKKSKIAKAQKREALVAKYADKRAALKAAGDFIGLAALPKDSSPVRMHNRDLIDGRPHAYMREFGMSRLNFRQLAHKGQIPGVRKASW.

Belongs to the universal ribosomal protein uS14 family. In terms of assembly, part of the 30S ribosomal subunit. Contacts proteins S3 and S10.

Binds 16S rRNA, required for the assembly of 30S particles and may also be responsible for determining the conformation of the 16S rRNA at the A site. This Leuconostoc citreum (strain KM20) protein is Small ribosomal subunit protein uS14.